A 493-amino-acid chain; its full sequence is C2H2-type transcription factor ffmA (493 aa).

A compositionally biased stretch (low complexity) spans 1–18 (MPMPQYTMQPQYPVSQPH). Disordered stretches follow at residues 1 to 50 (MPMP…SRYP), 68 to 140 (TTVG…YPDG), and 164 to 202 (EPPRTQVVGSQGRRGILPSVPGRVAPVTNGVNGTAKNTT). 2 stretches are compositionally biased toward polar residues: residues 69-79 (TVGSLPPSTFL) and 192-202 (NGVNGTAKNTT). The C2H2-type 1 zinc finger occupies 212–234 (FPCPHCNKTYLHAKHLKRHLLRH). A C2H2-type 2; degenerate zinc finger spans residues 240–265 (YMCVLCKDTFSRSDILKRHFQKCSIR). Polar residues-rich tracts occupy residues 288-307 (QAAANTAKSLQEEVSSTVPP) and 484-493 (ASTTLGGDGK). Disordered regions lie at residues 288 to 316 (QAAANTAKSLQEEVSSTVPPSNGIAGATF) and 468 to 493 (TTTAGPQEGGMNGLYLASTTLGGDGK).

It belongs to the krueppel C2H2-type zinc-finger protein family.

It is found in the nucleus. In terms of biological role, transcription factor that acts in coordination with atrR to regulate the expression of the ABC-type multidrug transporter abcG1 and thus plays a role in azole susceptibility. Regulates the expression of genes involved in fermentation. Is able to promote expression from the yeast FLO11 promoter. The chain is C2H2-type transcription factor ffmA from Aspergillus fumigatus (strain CBS 144.89 / FGSC A1163 / CEA10) (Neosartorya fumigata).